We begin with the raw amino-acid sequence, 200 residues long: Peptidyl-tRNA hydrolase (200 aa).

A tRNA-binding site is contributed by F16. H21 serves as the catalytic Proton acceptor. 3 residues coordinate tRNA: F67, N69, and N115.

It belongs to the PTH family. Monomer.

The protein localises to the cytoplasm. The enzyme catalyses an N-acyl-L-alpha-aminoacyl-tRNA + H2O = an N-acyl-L-amino acid + a tRNA + H(+). Functionally, hydrolyzes ribosome-free peptidyl-tRNAs (with 1 or more amino acids incorporated), which drop off the ribosome during protein synthesis, or as a result of ribosome stalling. In terms of biological role, catalyzes the release of premature peptidyl moieties from peptidyl-tRNA molecules trapped in stalled 50S ribosomal subunits, and thus maintains levels of free tRNAs and 50S ribosomes. The protein is Peptidyl-tRNA hydrolase of Prochlorococcus marinus (strain MIT 9215).